Reading from the N-terminus, the 544-residue chain is Terpene synthase 9 (544 aa).

The Mg(2+) site is built by Asp296, Asp300, and Glu449. A DDXXD motif motif is present at residues 296–300; the sequence is DDTFD.

This sequence belongs to the terpene synthase family. Tpsa subfamily. It depends on Mg(2+) as a cofactor. Requires Mn(2+) as cofactor.

The enzyme catalyses (2E,6E)-farnesyl diphosphate = (1E,4E)-germacrene B + diphosphate. It carries out the reaction (2E)-geranyl diphosphate = terpinolene + diphosphate. The catalysed reaction is (2E)-geranyl diphosphate = limonene + diphosphate. It catalyses the reaction (2E)-geranyl diphosphate = beta-myrcene + diphosphate. The enzyme catalyses (2Z,6Z)-farnesyl diphosphate = germacrene A + diphosphate. It carries out the reaction (2Z,6Z)-farnesyl diphosphate = alpha-humulene + diphosphate. It participates in secondary metabolite biosynthesis; terpenoid biosynthesis. Functionally, sesquiterpene synthase involved in the biosynthesis of volatile compounds. Mediates the conversion of (2E,6E)-farnesyl diphosphate (FPP) into (1E,4E)-germacrene B, but also smaller amounts of germacrene A and C, and of (2Z,6Z)-farnesyl diphosphate ((ZZ)-FPP) into alpha-humulene, germacrene A and germacrene B. Can act with a low efficiency as a monoterpene synthase with geranyl diphosphate (GPP) as substrate, thus producing beta-myrcene, limonene and terpinolene. This is Terpene synthase 9 from Solanum habrochaites (Wild tomato).